The sequence spans 485 residues: Pup--protein ligase (485 aa).

E33 contributes to the Mg(2+) binding site. R76 is an ATP binding site. Y78 is a binding site for Mg(2+). Catalysis depends on D80, which acts as the Proton acceptor. E86 lines the Mg(2+) pocket. T89 and W451 together coordinate ATP.

Belongs to the Pup ligase/Pup deamidase family. Pup-conjugating enzyme subfamily.

It carries out the reaction ATP + [prokaryotic ubiquitin-like protein]-L-glutamate + [protein]-L-lysine = ADP + phosphate + N(6)-([prokaryotic ubiquitin-like protein]-gamma-L-glutamyl)-[protein]-L-lysine.. It functions in the pathway protein degradation; proteasomal Pup-dependent pathway. Its pathway is protein modification; protein pupylation. Functionally, catalyzes the covalent attachment of the prokaryotic ubiquitin-like protein modifier Pup to the proteasomal substrate proteins, thereby targeting them for proteasomal degradation. This tagging system is termed pupylation. The ligation reaction involves the side-chain carboxylate of the C-terminal glutamate of Pup and the side-chain amino group of a substrate lysine. The sequence is that of Pup--protein ligase from Bifidobacterium longum subsp. infantis (strain ATCC 15697 / DSM 20088 / JCM 1222 / NCTC 11817 / S12).